A 117-amino-acid chain; its full sequence is Immunoglobulin heavy variable 1-58 (117 aa).

The N-terminal stretch at 1–19 is a signal peptide; that stretch reads MDWIWRILFLVGAATGAHS. The segment at 20–44 is framework-1; the sequence is QMQLVQSGPEVKKPGTSVKVSCKAS. The 98-residue stretch at 20-117 folds into the Ig-like domain; sequence QMQLVQSGPE…EDTAVYYCAA (98 aa). Cys-41 and Cys-115 are disulfide-bonded. The segment at 45 to 52 is complementarity-determining-1; it reads GFTFTSSA. The tract at residues 53-69 is framework-2; the sequence is VQWVRQARGQRLEWIGW. The complementarity-determining-2 stretch occupies residues 70-77; the sequence is IVVGSGNT. Residues 78–115 form a framework-3 region; it reads NYAQKFQERVTITRDMSTSTAYMELSSLRSEDTAVYYC. The interval 116–117 is complementarity-determining-3; it reads AA.

Immunoglobulins are composed of two identical heavy chains and two identical light chains; disulfide-linked.

The protein localises to the secreted. Its subcellular location is the cell membrane. Functionally, v region of the variable domain of immunoglobulin heavy chains that participates in the antigen recognition. Immunoglobulins, also known as antibodies, are membrane-bound or secreted glycoproteins produced by B lymphocytes. In the recognition phase of humoral immunity, the membrane-bound immunoglobulins serve as receptors which, upon binding of a specific antigen, trigger the clonal expansion and differentiation of B lymphocytes into immunoglobulins-secreting plasma cells. Secreted immunoglobulins mediate the effector phase of humoral immunity, which results in the elimination of bound antigens. The antigen binding site is formed by the variable domain of one heavy chain, together with that of its associated light chain. Thus, each immunoglobulin has two antigen binding sites with remarkable affinity for a particular antigen. The variable domains are assembled by a process called V-(D)-J rearrangement and can then be subjected to somatic hypermutations which, after exposure to antigen and selection, allow affinity maturation for a particular antigen. This is Immunoglobulin heavy variable 1-58 from Homo sapiens (Human).